A 71-amino-acid chain; its full sequence is UPF0434 protein Csal_1588 (71 aa).

It belongs to the UPF0434 family.

In Chromohalobacter salexigens (strain ATCC BAA-138 / DSM 3043 / CIP 106854 / NCIMB 13768 / 1H11), this protein is UPF0434 protein Csal_1588.